A 96-amino-acid polypeptide reads, in one-letter code: Large ribosomal subunit protein bL28 (96 aa).

The tract at residues 1–23 (MSRVCELSGKAPMTGNTVSHANN) is disordered.

It belongs to the bacterial ribosomal protein bL28 family.

The polypeptide is Large ribosomal subunit protein bL28 (Cereibacter sphaeroides (strain ATCC 17025 / ATH 2.4.3) (Rhodobacter sphaeroides)).